The sequence spans 490 residues: Cytochrome P450 2C54 (490 aa).

Ser127 bears the Phosphoserine mark. N6-acetyllysine is present on residues Lys252 and Lys375. Residue Cys435 participates in heme binding.

The protein belongs to the cytochrome P450 family. The cofactor is heme. As to expression, expressed in liver.

The protein localises to the endoplasmic reticulum membrane. It localises to the microsome membrane. The catalysed reaction is an organic molecule + reduced [NADPH--hemoprotein reductase] + O2 = an alcohol + oxidized [NADPH--hemoprotein reductase] + H2O + H(+). In terms of biological role, metabolizes arachidonic acid mainly to 12-hydroxyeicosatetraenoic acid (HETE). The sequence is that of Cytochrome P450 2C54 from Mus musculus (Mouse).